We begin with the raw amino-acid sequence, 435 residues long: 5-methylthioadenosine/S-adenosylhomocysteine deaminase (435 aa).

The Zn(2+) site is built by His65 and His67. 3 residues coordinate substrate: Glu94, Arg150, and His189. His216 provides a ligand contact to Zn(2+). The substrate site is built by Glu219 and Asp304. Asp304 is a Zn(2+) binding site.

The protein belongs to the metallo-dependent hydrolases superfamily. MTA/SAH deaminase family. Zn(2+) is required as a cofactor.

It catalyses the reaction S-adenosyl-L-homocysteine + H2O + H(+) = S-inosyl-L-homocysteine + NH4(+). It carries out the reaction S-methyl-5'-thioadenosine + H2O + H(+) = S-methyl-5'-thioinosine + NH4(+). In terms of biological role, catalyzes the deamination of 5-methylthioadenosine and S-adenosyl-L-homocysteine into 5-methylthioinosine and S-inosyl-L-homocysteine, respectively. Is also able to deaminate adenosine. The sequence is that of 5-methylthioadenosine/S-adenosylhomocysteine deaminase from Bacillus cereus (strain ATCC 10987 / NRS 248).